We begin with the raw amino-acid sequence, 323 residues long: Serine/threonine-protein phosphatase PP1-gamma catalytic subunit (323 aa).

A2 carries the N-acetylalanine modification. 4 residues coordinate Mn(2+): D64, H66, D92, and N124. H125 functions as the Proton donor in the catalytic mechanism. 2 residues coordinate Mn(2+): H173 and H248. The tract at residues K302–K323 is disordered. A phosphothreonine mark is found at T307 and T311.

It belongs to the PPP phosphatase family. PP-1 subfamily. As to quaternary structure, PP1 comprises a catalytic subunit, PPP1CA, PPP1CB or PPP1CC, which is folded into its native form by inhibitor 2 and glycogen synthetase kinase 3, and then complexed to one or several targeting or regulatory subunits. PPP1R12A, PPP1R12B and PPP1R12C mediate binding to myosin. PPP1R3A (in skeletal muscle), PPP1R3B (in liver), PPP1R3C, PPP1R3D and PPP1R3F (in brain) mediate binding to glycogen. Interacts with cyanobacterial toxin microcystin; disulfide-linked. Interacts with PPP1R3B and PPP1R7. Isoform 2 interacts with SPZ1. Interacts with CDCA2. PPP1R15A and PPP1R15B mediate binding to EIF2S1. Part of a complex containing PPP1R15B, PP1 and NCK1/2. Interacts with IKFZ1; the interaction targets PPP1CC to pericentromeric heterochromatin, dephosphorylates IKAROS, stabilizes it and prevents it from degradation. Interacts with PPP1R42; the interaction is direct. Interacts with NOM1 and PPP1R8. Component of the PTW/PP1 phosphatase complex, composed of PPP1R10/PNUTS, TOX4, WDR82, and PPP1CA or PPP1CB or PPP1CC. Interacts with PPP1R8. Interacts with isoform 1 and isoform 4 NEK2. Interacts with URI1; the interaction is phosphorylation-dependent and occurs in a growth factor-dependent manner. Interacts with FOXP3. Interacts with TMEM225 (via RVxF motif). Interacts with MKI67. Interacts with RRP1B; this targets PPP1CC to the nucleolus. Interacts with PPP1R2B. Found in a complex with PPP1CA, PPP1CC, SHC1 and PEAK1. Interacts with DYNLT4. Interacts (via RVxF motif) with FIRRM; regulates PLK1 kinase activity. Interacts with the KNL1 complex subunit KNL1; the interaction is direct and mutually exclusive with KNL1 binding to microtubules. Component of the SHOC2-MRAS-PP1c (SMP) complex consisting of SHOC2, GTP-bound M-Ras/MRAS and the catalytic subunit of protein phosphatase 1 (either PPP1CA, PPP1CB or PPP1CC). SHOC2 and PP1c preferably bind M-Ras/MRAS, but they also bind K-Ras/KRAS, N-Ras/NRAS and H-Ras/HRAS; these interactions are GTP-dependent and both SHOC2 and PP1c are required to form a stable complex. Interacts with SHOC2 in the absence of Ras GTPases. Requires Mn(2+) as cofactor. In terms of processing, phosphorylated by NEK2.

Its subcellular location is the cytoplasm. The protein localises to the nucleus. It localises to the nucleolus. It is found in the nucleoplasm. The protein resides in the nucleus speckle. Its subcellular location is the chromosome. The protein localises to the centromere. It localises to the kinetochore. It is found in the cleavage furrow. The protein resides in the midbody. Its subcellular location is the mitochondrion. The protein localises to the cytoskeleton. It localises to the microtubule organizing center. The catalysed reaction is O-phospho-L-seryl-[protein] + H2O = L-seryl-[protein] + phosphate. It catalyses the reaction O-phospho-L-threonyl-[protein] + H2O = L-threonyl-[protein] + phosphate. With respect to regulation, inactivated by binding to URI1. The phosphatase activity of the PPP1R15A-PP1 complex toward EIF2S1 is specifically inhibited by Salubrinal, a drug that protects cells from endoplasmic reticulum stress. Functionally, protein phosphatase that associates with over 200 regulatory proteins to form highly specific holoenzymes which dephosphorylate hundreds of biological targets. Protein phosphatase 1 (PP1) is essential for cell division, and participates in the regulation of glycogen metabolism, muscle contractility and protein synthesis. Dephosphorylates RPS6KB1. Involved in regulation of ionic conductances and long-term synaptic plasticity. May play an important role in dephosphorylating substrates such as the postsynaptic density-associated Ca(2+)/calmodulin dependent protein kinase II. Component of the PTW/PP1 phosphatase complex, which plays a role in the control of chromatin structure and cell cycle progression during the transition from mitosis into interphase. In balance with CSNK1D and CSNK1E, determines the circadian period length, through the regulation of the speed and rhythmicity of PER1 and PER2 phosphorylation. May dephosphorylate CSNK1D and CSNK1E. Regulates the recruitment of the SKA complex to kinetochores. Dephosphorylates the 'Ser-418' residue of FOXP3 in regulatory T-cells (Treg) from patients with rheumatoid arthritis, thereby inactivating FOXP3 and rendering Treg cells functionally defective. Together with PPP1CA (PP1-alpha subunit), dephosphorylates IFIH1/MDA5 and RIG-I leading to their activation and a functional innate immune response. Core component of the SHOC2-MRAS-PP1c (SMP) holophosphatase complex that regulates the MAPK pathway activation. The SMP complex specifically dephosphorylates the inhibitory phosphorylation at 'Ser-259' of RAF1 kinase, 'Ser-365' of BRAF kinase and 'Ser-214' of ARAF kinase, stimulating their kinase activities. Dephosphorylates MKI67 at the onset of anaphase. The SMP complex enhances the dephosphorylation activity and substrate specificity of PP1c. The chain is Serine/threonine-protein phosphatase PP1-gamma catalytic subunit (PPP1CC) from Homo sapiens (Human).